Here is a 97-residue protein sequence, read N- to C-terminus: Mitochondrial import inner membrane translocase subunit Tim8 A (97 aa).

The Twin CX3C motif signature appears at 43–66; sequence CWEKCMDKPGPKLDSRAEACFVNC. 2 disulfides stabilise this stretch: Cys43-Cys66 and Cys47-Cys62. Ser57, Ser87, Ser94, and Ser96 each carry phosphoserine.

It belongs to the small Tim family. Heterohexamer; composed of 3 copies of TIMM8A and 3 copies of TIMM13, named soluble 70 kDa complex. Associates with the TIM22 complex, whose core is composed of TIMM22. In terms of tissue distribution, present at high level in liver and brain, and at lower level in muscle and heart. In CNS sections, it is predominantly present in the soma and the dendritic portion of the Purkinje cells of the cerebellum, but not in the glial cells. Scattered expression also is also detected in the brain stem, olfactory bulb, substantia nigra, hippocampus and striatum (at protein level). Ubiquitously expressed.

It is found in the mitochondrion inner membrane. In terms of biological role, mitochondrial intermembrane chaperone that participates in the import and insertion of some multi-pass transmembrane proteins into the mitochondrial inner membrane. Also required for the transfer of beta-barrel precursors from the TOM complex to the sorting and assembly machinery (SAM complex) of the outer membrane. Acts as a chaperone-like protein that protects the hydrophobic precursors from aggregation and guide them through the mitochondrial intermembrane space. The TIMM8-TIMM13 complex mediates the import of proteins such as TIMM23, SLC25A12/ARALAR1 and SLC25A13/ARALAR2, while the predominant TIMM9-TIMM10 70 kDa complex mediates the import of much more proteins. The sequence is that of Mitochondrial import inner membrane translocase subunit Tim8 A (Timm8a1) from Mus musculus (Mouse).